Consider the following 202-residue polypeptide: Ras-related protein Rab-2B (202 aa).

31 to 38 (GDSAVGKS) provides a ligand contact to GTP. The Effector region signature appears at 53-61 (SDFTIGVEF). Residues 79–83 (DTAGQ) and 137–140 (NKAD) each bind GTP.

This sequence belongs to the small GTPase superfamily. Rab family. Post-translationally, this sequence lacks the C-terminal cysteine motifs subject to isoprenylation in other Rab proteins.

This chain is Ras-related protein Rab-2B (rab2B), found in Dictyostelium discoideum (Social amoeba).